Reading from the N-terminus, the 141-residue chain is Large ribosomal subunit protein uL11 (141 aa).

The protein belongs to the universal ribosomal protein uL11 family. In terms of assembly, part of the ribosomal stalk of the 50S ribosomal subunit. Interacts with L10 and the large rRNA to form the base of the stalk. L10 forms an elongated spine to which L12 dimers bind in a sequential fashion forming a multimeric L10(L12)X complex. In terms of processing, one or more lysine residues are methylated.

Its function is as follows. Forms part of the ribosomal stalk which helps the ribosome interact with GTP-bound translation factors. The chain is Large ribosomal subunit protein uL11 from Ruegeria pomeroyi (strain ATCC 700808 / DSM 15171 / DSS-3) (Silicibacter pomeroyi).